Consider the following 190-residue polypeptide: Shikimate kinase (190 aa).

13-18 (GSGKTT) serves as a coordination point for ATP. Thr-17 is a binding site for Mg(2+). The substrate site is built by Asp-35, Arg-59, and Gly-81. Arg-119 lines the ATP pocket. Residue Arg-138 participates in substrate binding. Gln-155 provides a ligand contact to ATP.

Belongs to the shikimate kinase family. Monomer. Requires Mg(2+) as cofactor.

It localises to the cytoplasm. The enzyme catalyses shikimate + ATP = 3-phosphoshikimate + ADP + H(+). It functions in the pathway metabolic intermediate biosynthesis; chorismate biosynthesis; chorismate from D-erythrose 4-phosphate and phosphoenolpyruvate: step 5/7. Its function is as follows. Catalyzes the specific phosphorylation of the 3-hydroxyl group of shikimic acid using ATP as a cosubstrate. The protein is Shikimate kinase of Nitrosococcus oceani (strain ATCC 19707 / BCRC 17464 / JCM 30415 / NCIMB 11848 / C-107).